The following is a 121-amino-acid chain: Small ribosomal subunit protein uS13 (121 aa).

A disordered region spans residues 94-121; the sequence is GLPVRGQNTKNNSRTRKGPRRTVANKKK. Basic residues predominate over residues 106-121; sequence SRTRKGPRRTVANKKK.

The protein belongs to the universal ribosomal protein uS13 family. Part of the 30S ribosomal subunit. Forms a loose heterodimer with protein S19. Forms two bridges to the 50S subunit in the 70S ribosome.

Its function is as follows. Located at the top of the head of the 30S subunit, it contacts several helices of the 16S rRNA. In the 70S ribosome it contacts the 23S rRNA (bridge B1a) and protein L5 of the 50S subunit (bridge B1b), connecting the 2 subunits; these bridges are implicated in subunit movement. Contacts the tRNAs in the A and P-sites. This chain is Small ribosomal subunit protein uS13, found in Exiguobacterium sibiricum (strain DSM 17290 / CCUG 55495 / CIP 109462 / JCM 13490 / 255-15).